Consider the following 416-residue polypeptide: Multifunctional CCA protein (416 aa).

ATP contacts are provided by Gly8 and Arg11. Positions 8 and 11 each coordinate CTP. 2 residues coordinate Mg(2+): Asp21 and Asp23. The ATP site is built by Arg91, Arg137, and Arg140. 3 residues coordinate CTP: Arg91, Arg137, and Arg140. In terms of domain architecture, HD spans 228-329; the sequence is TGLHTMLVLA…IKLFDKADFW (102 aa).

Belongs to the tRNA nucleotidyltransferase/poly(A) polymerase family. Bacterial CCA-adding enzyme type 1 subfamily. In terms of assembly, monomer. Can also form homodimers and oligomers. Mg(2+) serves as cofactor. Ni(2+) is required as a cofactor.

It catalyses the reaction a tRNA precursor + 2 CTP + ATP = a tRNA with a 3' CCA end + 3 diphosphate. The catalysed reaction is a tRNA with a 3' CCA end + 2 CTP + ATP = a tRNA with a 3' CCACCA end + 3 diphosphate. Catalyzes the addition and repair of the essential 3'-terminal CCA sequence in tRNAs without using a nucleic acid template. Adds these three nucleotides in the order of C, C, and A to the tRNA nucleotide-73, using CTP and ATP as substrates and producing inorganic pyrophosphate. tRNA 3'-terminal CCA addition is required both for tRNA processing and repair. Also involved in tRNA surveillance by mediating tandem CCA addition to generate a CCACCA at the 3' terminus of unstable tRNAs. While stable tRNAs receive only 3'-terminal CCA, unstable tRNAs are marked with CCACCA and rapidly degraded. This chain is Multifunctional CCA protein, found in Shewanella sp. (strain ANA-3).